Here is a 374-residue protein sequence, read N- to C-terminus: Queuine tRNA-ribosyltransferase (374 aa).

D89 (proton acceptor) is an active-site residue. Substrate-binding positions include 89–93 (DSGGF), D143, Q185, and G212. The interval 243–249 (GVGKPED) is RNA binding. The Nucleophile role is filled by D262. The interval 267–271 (TRNAR) is RNA binding; important for wobble base 34 recognition. Residues C300, C302, C305, and H331 each contribute to the Zn(2+) site.

The protein belongs to the queuine tRNA-ribosyltransferase family. Homodimer. Within each dimer, one monomer is responsible for RNA recognition and catalysis, while the other monomer binds to the replacement base PreQ1. Requires Zn(2+) as cofactor.

It carries out the reaction 7-aminomethyl-7-carbaguanine + guanosine(34) in tRNA = 7-aminomethyl-7-carbaguanosine(34) in tRNA + guanine. Its pathway is tRNA modification; tRNA-queuosine biosynthesis. Its function is as follows. Catalyzes the base-exchange of a guanine (G) residue with the queuine precursor 7-aminomethyl-7-deazaguanine (PreQ1) at position 34 (anticodon wobble position) in tRNAs with GU(N) anticodons (tRNA-Asp, -Asn, -His and -Tyr). Catalysis occurs through a double-displacement mechanism. The nucleophile active site attacks the C1' of nucleotide 34 to detach the guanine base from the RNA, forming a covalent enzyme-RNA intermediate. The proton acceptor active site deprotonates the incoming PreQ1, allowing a nucleophilic attack on the C1' of the ribose to form the product. After dissociation, two additional enzymatic reactions on the tRNA convert PreQ1 to queuine (Q), resulting in the hypermodified nucleoside queuosine (7-(((4,5-cis-dihydroxy-2-cyclopenten-1-yl)amino)methyl)-7-deazaguanosine). The protein is Queuine tRNA-ribosyltransferase of Saccharophagus degradans (strain 2-40 / ATCC 43961 / DSM 17024).